The following is a 308-amino-acid chain: MELLFLGTGAGMPAKTRNVTSVALKLLEERRSVWLFDCGEATQHQILHTTIKPRKIEKIFITHLHGDHVYGLPGLLGSRSFQGGEEELTIYGPKGIKAFIETSLNVTATHLTYPLTVHEIEEGTVFEDEQFIVTAASVIHGVEAFGYRVQEKDIPGALQAGRLKEMNIPPGPVYQKIKKGETVTLDDGRIINGRDFLEPPKKGRIVAFSGDTRASERVTELARNADVLVHEATFAKEDAKLAHNYYHATTEQAAQTAKKAGAKQLILTHISARYQGESPIERLEHEAKAVFENSKIAFDFMEVTVERS.

Zn(2+)-binding residues include His63, His65, Asp67, His68, His140, Asp211, and His269. The active-site Proton acceptor is Asp67.

Belongs to the RNase Z family. In terms of assembly, homodimer. Zn(2+) is required as a cofactor.

It carries out the reaction Endonucleolytic cleavage of RNA, removing extra 3' nucleotides from tRNA precursor, generating 3' termini of tRNAs. A 3'-hydroxy group is left at the tRNA terminus and a 5'-phosphoryl group is left at the trailer molecule.. Functionally, zinc phosphodiesterase, which displays some tRNA 3'-processing endonuclease activity. Probably involved in tRNA maturation, by removing a 3'-trailer from precursor tRNA. This Bacillus velezensis (strain DSM 23117 / BGSC 10A6 / LMG 26770 / FZB42) (Bacillus amyloliquefaciens subsp. plantarum) protein is Ribonuclease Z.